We begin with the raw amino-acid sequence, 606 residues long: MSTASAASSSSSSSAGEMIEAPSQVLNFEEIDYKEIEVEEVVGRGAFGVVCKAKWRAKDVAIKQIESESERKAFIVELRQLSRVNHPNIVKLYGACLNPVCLVMEYAEGGSLYNVLHGAEPLPYYTAAHAMSWCLQCSQGVAYLHSMQPKALIHRDLKPPNLLLVAGGTVLKICDFGTACDIQTHMTNNKGSAAWMAPEVFEGSNYSEKCDVFSWGIILWEVITRRKPFDEIGGPAFRIMWAVHNGTRPPLIKNLPKPIESLMTRCWSKDPSQRPSMEEIVKIMTHLMRYFPGADEPLQYPCQYSDEGQSNSATSTGSFMDIASTNTSNKSDTNMEQVPATNDTIKRLESKLLKNQAKQQSESGRLSLGASRGSSVESLPPTSEGKRMSADMSEIEARIAATTAYSKPKRGHRKTASFGNILDVPEIVISGNGQPRRRSIQDLTVTGTEPGQVSSRSSSPSVRMITTSGPTSEKPTRSHPWTPDDSTDTNGSDNSIPMAYLTLDHQLQPLAPCPNSKESMAVFEQHCKMAQEYMKVQTEIALLLQRKQELVAELDQDEKDQQNTSRLVQEHKKLLDENKSLSTYYQQCKKQLEVIRSQQQKRQGTS.

Residues 1–300 (MSTASAASSS…FPGADEPLQY (300 aa)) form an interaction with MAPK8IP1 region. A Protein kinase domain is found at 36 to 291 (IEVEEVVGRG…KIMTHLMRYF (256 aa)). Residues 42-50 (VGRGAFGVV) and lysine 63 each bind ATP. A Glycyl lysine isopeptide (Lys-Gly) (interchain with G-Cter in ubiquitin) cross-link involves residue lysine 72. Aspartate 156 acts as the Proton acceptor in catalysis. Residue lysine 158 forms a Glycyl lysine isopeptide (Lys-Gly) (interchain with G-Cter in ubiquitin) linkage. Residues threonine 184 and threonine 187 each carry the (Microbial infection) O-acetylthreonine; by Yersinia YopJ; alternate modification. A phosphothreonine; by autocatalysis; alternate mark is found at threonine 184 and threonine 187. Phosphoserine; by autocatalysis is present on serine 192. Lysine 209 participates in a covalent cross-link: Glycyl lysine isopeptide (Lys-Gly) (interchain with G-Cter in ubiquitin). The segment at 301–338 (PCQYSDEGQSNSATSTGSFMDIASTNTSNKSDTNMEQV) is disordered. The segment covering 306 to 338 (DEGQSNSATSTGSFMDIASTNTSNKSDTNMEQV) has biased composition (polar residues). Threonine 341 carries the (Microbial infection) O-acetylthreonine; by Yersinia YopJ; alternate modification. The disordered stretch occupies residues 354–391 (KNQAKQQSESGRLSLGASRGSSVESLPPTSEGKRMSAD). The span at 361-375 (SESGRLSLGASRGSS) shows a compositional bias: low complexity. Residues serine 367, serine 389, and serine 439 each carry the phosphoserine modification. Positions 443–452 (LTVTGTEPGQ) are enriched in polar residues. The segment at 443-493 (LTVTGTEPGQVSSRSSSPSVRMITTSGPTSEKPTRSHPWTPDDSTDTNGSD) is disordered. (Microbial infection) O-acetylthreonine; by Yersinia YopJ; alternate is present on residues threonine 444, threonine 446, and threonine 448. Residues 453–463 (VSSRSSSPSVR) show a composition bias toward low complexity. Serine 455 is subject to Phosphoserine. A compositionally biased stretch (polar residues) spans 464–473 (MITTSGPTSE). Threonine 467 carries the post-translational modification (Microbial infection) O-acetylthreonine; by Yersinia YopJ; alternate.

It belongs to the protein kinase superfamily. STE Ser/Thr protein kinase family. MAP kinase kinase kinase subfamily. Can form homodimer. Binds both upstream activators and downstream substrates in multimolecular complexes. Interacts with TAB1/MAP3K7IP1, TAB2/MAP3K7IP2 and TAB3/MAP3K7IP3. Identified in the TRIKA2 complex composed of MAP3K7/TAK1, TAB1/MAP3K7IP1 and TAB2/MAP3K7IP2. Interacts with PPM1L and PPM1B/PP2CB. Interaction with PP2A and PPP6C leads to its repressed activity. Interacts with TRAF6 and TAB1/MAP3K7IP1; during IL-1 signaling. Interacts with TAOK1 and TAOK2; interaction with TAOK2 interferes with MAP3K7 interaction with IKKA, thus preventing NF-kappa-B activation. Interacts with DYNC2I2 (via WD domains). Interacts with CYLD and RBCK1. Interacts with TGFBR1; induces MAP3K7/TAK1 activation by TRAF6. Interacts with MAPK8IP1 and SMAD6. Interacts with isoform 1 of VRK2. Interacts with DAB2; the interaction is induced by TGF-beta stimulation and may mediate TGF-beta stimulated JNK activation. Interacts with TRIM5. Part of a complex containing ITCH, NDFIP1 and MAP3K7. Interacts with IFIT5; the interaction synergizes the recruitment of IKK to MAP3K7 and enhances IKK phosphorylation. Interacts with PLEKHM1 (via N- and C-terminus). Interacts with TRIM8. Found in a complex with SH3RF1, RAC2, MAP2K7/MKK7, MAPK8IP1/JIP1, MAPK8/JNK1 and MAPK9/JNK2. Interacts with SASH1. Interacts with RIPK1. As to quaternary structure, (Microbial infection) Interacts with herpes simplex virus 2 protein US2; this interaction induces MAP3K7 phosphorylation and subsequent activation. Mg(2+) is required as a cofactor. In terms of processing, association with TAB1/MAP3K7IP1 promotes autophosphorylation at Ser-192 and subsequent activation. Association with TAB2/MAP3K7IP2, itself associated with free unanchored Lys-63 polyubiquitin chain, promotes autophosphorylation and subsequent activation of MAP3K7. Dephosphorylation at Ser-192 by PPM1B/PP2CB and at Thr-187 by PP2A and PPP6C leads to inactivation. Post-translationally, 'Lys-48'-linked polyubiquitination at Lys-72 is induced by TNFalpha, and leads to proteasomal degradation. Undergoes 'Lys-48'-linked polyubiquitination catalyzed by ITCH. Requires 'Lys-63'-linked polyubiquitination for autophosphorylation and subsequent activation. 'Lys-63'-linked ubiquitination does not lead to proteasomal degradation. Deubiquitinated by CYLD, a protease that selectively cleaves 'Lys-63'-linked ubiquitin chains. Deubiquitinated by Y.enterocolitica YopP. Deubiquitinated by USP19; leading to negative regulation of TNF-alpha- and IL-1beta-triggered NF-kappa-B activation. (Microbial infection) Cleaved and inactivated by the proteases 3C of coxsackievirus A16 and human enterovirus D68, allowing the virus to disrupt TRAF6-triggered NF-kappa-B induction. In terms of processing, (Microbial infection) Acetylation of Thr-184 and Thr-187 by Yersinia YopJ prevents phosphorylation and activation, thus blocking the MAPK signaling pathway. As to expression, isoform 1A is the most abundant in ovary, skeletal muscle, spleen and blood mononuclear cells. Isoform 1B is highly expressed in brain, kidney and small intestine. Isoform 1C is the major form in prostate. Isoform 1D is the less abundant form.

The protein localises to the cytoplasm. It is found in the cell membrane. The enzyme catalyses L-seryl-[protein] + ATP = O-phospho-L-seryl-[protein] + ADP + H(+). It carries out the reaction L-threonyl-[protein] + ATP = O-phospho-L-threonyl-[protein] + ADP + H(+). Its activity is regulated as follows. Activated by pro-inflammatory cytokines and in response to physical and chemical stresses, including osmotic stress, oxidative stress, arsenic and ultraviolet light irradiation. Activated by 'Lys-63'-linked polyubiquitination and by autophosphorylation. Association with TAB1/MAP3K7IP1 and TAB2/MAP3K7IP2 promotes activation through autophosphorylation, whereas PPM1B/PP2CB, PP2A and PPP6C dephosphorylation leads to inactivation. Ceramides are also able to activate MAP3K7/TAK1. Functionally, serine/threonine kinase which acts as an essential component of the MAP kinase signal transduction pathway. Plays an important role in the cascades of cellular responses evoked by changes in the environment. Mediates signal transduction of TRAF6, various cytokines including interleukin-1 (IL-1), transforming growth factor-beta (TGFB), TGFB-related factors like BMP2 and BMP4, toll-like receptors (TLR), tumor necrosis factor receptor CD40 and B-cell receptor (BCR). Once activated, acts as an upstream activator of the MKK/JNK signal transduction cascade and the p38 MAPK signal transduction cascade through the phosphorylation and activation of several MAP kinase kinases like MAP2K1/MEK1, MAP2K3/MKK3, MAP2K6/MKK6 and MAP2K7/MKK7. These MAP2Ks in turn activate p38 MAPKs and c-jun N-terminal kinases (JNKs); both p38 MAPK and JNK pathways control the transcription factors activator protein-1 (AP-1). Independently of MAP2Ks and p38 MAPKs, acts as a key activator of NF-kappa-B by promoting activation of the I-kappa-B-kinase (IKK) core complex. Mechanistically, recruited to polyubiquitin chains of RIPK2 and IKBKG/NEMO via TAB2/MAP3K7IP2 and TAB3/MAP3K7IP3, and catalyzes phosphorylation and activation of IKBKB/IKKB component of the IKK complex, leading to NF-kappa-B activation. In osmotic stress signaling, plays a major role in the activation of MAPK8/JNK1, but not that of NF-kappa-B. Promotes TRIM5 capsid-specific restriction activity. Phosphorylates RIPK1 at 'Ser-321' which positively regulates RIPK1 interaction with RIPK3 to promote necroptosis but negatively regulates RIPK1 kinase activity and its interaction with FADD to mediate apoptosis. Phosphorylates STING1 in response to cGAMP-activation, promoting association between STEEP1 and STING1 and STING1 translocation to COPII vesicles. The chain is Mitogen-activated protein kinase kinase kinase 7 from Homo sapiens (Human).